Consider the following 248-residue polypeptide: 3-deoxy-manno-octulosonate cytidylyltransferase (248 aa).

It belongs to the KdsB family.

Its subcellular location is the cytoplasm. It carries out the reaction 3-deoxy-alpha-D-manno-oct-2-ulosonate + CTP = CMP-3-deoxy-beta-D-manno-octulosonate + diphosphate. The protein operates within nucleotide-sugar biosynthesis; CMP-3-deoxy-D-manno-octulosonate biosynthesis; CMP-3-deoxy-D-manno-octulosonate from 3-deoxy-D-manno-octulosonate and CTP: step 1/1. Its pathway is bacterial outer membrane biogenesis; lipopolysaccharide biosynthesis. Activates KDO (a required 8-carbon sugar) for incorporation into bacterial lipopolysaccharide in Gram-negative bacteria. The protein is 3-deoxy-manno-octulosonate cytidylyltransferase of Escherichia coli O127:H6 (strain E2348/69 / EPEC).